Here is a 130-residue protein sequence, read N- to C-terminus: Small ribosomal subunit protein uS11 (130 aa).

The protein belongs to the universal ribosomal protein uS11 family. As to quaternary structure, part of the 30S ribosomal subunit. Interacts with proteins S7 and S18. Binds to IF-3.

Located on the platform of the 30S subunit, it bridges several disparate RNA helices of the 16S rRNA. Forms part of the Shine-Dalgarno cleft in the 70S ribosome. This chain is Small ribosomal subunit protein uS11, found in Xanthomonas oryzae pv. oryzae (strain MAFF 311018).